The chain runs to 130 residues: MLINAARLLLPAAALVHLSLAWATSDRCNGYSSTLIQIKHAGDIYKQPSVPGLPPPGVNPYSLIDTLLKNGEDWCKHCASPRVSVDAGRYKAQMDKLLSYAHPYSASSWDSVQSLGDALEHLCKASRKEN.

The signal sequence occupies residues 1–23 (MLINAARLLLPAAALVHLSLAWA). A plant immunity suppression domain region spans residues 68–85 (LKNGEDWCKHCASPRVSV).

It is found in the secreted. It localises to the host cell. The protein resides in the host periplasm. Its function is as follows. Secreted effector required for full virulence of U.virens. Inhibits host pathogen-associated molecular pattern-triggered immunity including flg22- and chitin-induced defense gene expression and oxidative burst. The protein is Secreted cysteine-rich effector 2 of Ustilaginoidea virens (Rice false smut fungus).